The chain runs to 117 residues: Venom protein TxLP11 (117 aa).

Residues 1 to 22 (MNTKTLIVVFLVCLLVSEVVLA) form the signal peptide.

Post-translationally, contains 4 disulfide bonds. In terms of tissue distribution, expressed by the venom gland.

It localises to the secreted. This chain is Venom protein TxLP11, found in Lychas mucronatus (Chinese swimming scorpion).